A 138-amino-acid polypeptide reads, in one-letter code: Ribulose bisphosphate carboxylase small subunit (138 aa).

It belongs to the RuBisCO small chain family. Heterohexadecamer of 8 large and 8 small subunits.

Its subcellular location is the plastid. The protein resides in the chloroplast. Its function is as follows. RuBisCO catalyzes two reactions: the carboxylation of D-ribulose 1,5-bisphosphate, the primary event in carbon dioxide fixation, as well as the oxidative fragmentation of the pentose substrate in the photorespiration process. Both reactions occur simultaneously and in competition at the same active site. Although the small subunit is not catalytic it is essential for maximal activity. In Pyropia yezoensis (Susabi-nori), this protein is Ribulose bisphosphate carboxylase small subunit.